Reading from the N-terminus, the 216-residue chain is Small ribosomal subunit protein uS3c (216 aa).

The KH type-2 domain occupies 43-118 (IKNYIQKNIR…KLNIAIVKIT (76 aa)).

It belongs to the universal ribosomal protein uS3 family. As to quaternary structure, part of the 30S ribosomal subunit.

It is found in the plastid. The protein localises to the chloroplast. The chain is Small ribosomal subunit protein uS3c (rps3) from Phaseolus vulgaris (Kidney bean).